The primary structure comprises 296 residues: NAD kinase (296 aa).

D78 functions as the Proton acceptor in the catalytic mechanism. Residues 78–79, 152–153, R180, D182, and Q251 each bind NAD(+); these read DG and ND.

It belongs to the NAD kinase family. A divalent metal cation is required as a cofactor.

The protein localises to the cytoplasm. It carries out the reaction NAD(+) + ATP = ADP + NADP(+) + H(+). In terms of biological role, involved in the regulation of the intracellular balance of NAD and NADP, and is a key enzyme in the biosynthesis of NADP. Catalyzes specifically the phosphorylation on 2'-hydroxyl of the adenosine moiety of NAD to yield NADP. This chain is NAD kinase, found in Neisseria meningitidis serogroup C (strain 053442).